Reading from the N-terminus, the 666-residue chain is Pentatricopeptide repeat-containing protein At1g64100 (666 aa).

15 PPR repeats span residues 105–139, 140–174, 175–209, 225–259, 260–294, 295–329, 330–364, 365–399, 400–430, 431–465, 466–500, 501–535, 536–570, 571–605, and 606–640; these read TAVD…RIPL, NIYS…GFQP, DVVT…GFLE, VVIT…GLHI, DVVT…HIKP, DVVI…GIAP, NVFT…EINP, DVLT…CIFP, DTVT…MASP, DVVT…GLVA, NTTT…GVCP, DTIT…KIDL, DTVA…GVEP, DVQT…GHEP, and DNST…GFSG.

The protein belongs to the PPR family. P subfamily.

This is Pentatricopeptide repeat-containing protein At1g64100 from Arabidopsis thaliana (Mouse-ear cress).